The following is a 246-amino-acid chain: Neuromodulin (246 aa).

The segment at 1–246 (MLCCMRRTKQ…EESKADQENA (246 aa)) is disordered. S-palmitoyl cysteine attachment occurs at residues Cys-3 and Cys-4. Basic and acidic residues predominate over residues 9–33 (KQVEKNEDGDQKIEQDGIKPEDKAH). An IQ domain is found at 32 to 61 (AHKAATKIQASFRGHITRKKLKGEKKADAP). Low complexity-rich tracts occupy residues 87–99 (ASAATEASAADSA) and 125–157 (SEQPAPQAATPAASSEEKPAAAAETESATKAST). Residues 164-176 (KADEAQDKEEPKQ) show a composition bias toward basic and acidic residues. Positions 177–203 (ADVPAADTTATTTPAAEDATAKATAQP) are enriched in low complexity. Basic and acidic residues-rich tracts occupy residues 213 to 225 (TEEKTDAVEETKP) and 237 to 246 (EESKADQENA).

It belongs to the neuromodulin family. In terms of assembly, binds calmodulin with a greater affinity in the absence of Ca(2+) than in its presence. Post-translationally, palmitoylated. Palmitoylation is essential for plasma membrane association. Expressed in neurons.

It localises to the cell membrane. Its subcellular location is the cell projection. The protein resides in the growth cone membrane. It is found in the synapse. The protein localises to the filopodium membrane. Its function is as follows. This protein is associated with nerve growth. It is a major component of the motile 'growth cones' that form the tips of elongating axons. Plays a role in axonal and dendritic filopodia induction. This is Neuromodulin (GAP43) from Gallus gallus (Chicken).